Here is a 257-residue protein sequence, read N- to C-terminus: MGLAKRIIPCLDVDNGRVVKGVQFVDIRDAGDPVEVAKRYNEQGADEITFLDITASSDDRETTVHMVEAIASQVFIPLTVGGGIRTCEDIRRMLNAGADKVGINTAAVFNPEFVREAAQRFGSQCIVVAIDAKKVSAEGEPDKWEIFTHGGRKPTGLDAVEWAKKMVEYGAGEILLTSMDRDGTKNGFDLGVTRAISEAVHVPVIASGGVGNLDHLVDGVIEGKADAVLAASIFHFGEYSIQEAKQRMTDAGIEMRL.

Active-site residues include D12 and D131.

Belongs to the HisA/HisF family. In terms of assembly, heterodimer of HisH and HisF.

The protein resides in the cytoplasm. The enzyme catalyses 5-[(5-phospho-1-deoxy-D-ribulos-1-ylimino)methylamino]-1-(5-phospho-beta-D-ribosyl)imidazole-4-carboxamide + L-glutamine = D-erythro-1-(imidazol-4-yl)glycerol 3-phosphate + 5-amino-1-(5-phospho-beta-D-ribosyl)imidazole-4-carboxamide + L-glutamate + H(+). The protein operates within amino-acid biosynthesis; L-histidine biosynthesis; L-histidine from 5-phospho-alpha-D-ribose 1-diphosphate: step 5/9. IGPS catalyzes the conversion of PRFAR and glutamine to IGP, AICAR and glutamate. The HisF subunit catalyzes the cyclization activity that produces IGP and AICAR from PRFAR using the ammonia provided by the HisH subunit. This is Imidazole glycerol phosphate synthase subunit HisF from Marinomonas sp. (strain MWYL1).